The primary structure comprises 90 residues: uncharacterized protein (90 aa).

Lys88 is covalently cross-linked (Isoglutamyl lysine isopeptide (Lys-Gln) (interchain with Q-Cter in protein Pup)).

This is an uncharacterized protein from Mycolicibacterium smegmatis (strain ATCC 700084 / mc(2)155) (Mycobacterium smegmatis).